The primary structure comprises 1233 residues: Structural maintenance of chromosomes protein 1A (1233 aa).

32–39 (GPNGSGKS) lines the ATP pocket. Coiled-coil stretches lie at residues 104 to 124 (EYKINNKVVQLHEYSEELEKL) and 163 to 503 (ELAQ…KAEI). Residues 284–293 (IKEKDSELNQ) show a composition bias toward basic and acidic residues. Disordered stretches follow at residues 284–307 (IKEKDSELNQKRPQYIKAKENTSH) and 350–369 (FEERMEEESQSQGRDLTLEE). Ser358 and Ser360 each carry phosphoserine. In terms of domain architecture, SMC hinge spans 515-629 (VYGRLIDLCQ…DNVEDARRIA (115 aa)). N6-acetyllysine occurs at positions 648 and 713. Positions 660–935 (KAKARRWDEK…RHNLLQACKM (276 aa)) form a coiled coil. Residues 946-969 (TMDDISQEEGGSQGEESVSGSQRT) are disordered. Positions 953 to 967 (EEGGSQGEESVSGSQ) are enriched in low complexity. Phosphoserine occurs at positions 957, 962, 966, and 970. Residues 991 to 1068 (KDAQAEEEIK…FEQIKKERFD (78 aa)) are a coiled coil. Position 1037 is an N6-acetyllysine (Lys1037).

The protein belongs to the SMC family. SMC1 subfamily. Forms a heterodimer with SMC3 in cohesin complexes. Cohesin complexes are composed of the SMC1 (SMC1A or meiosis-specific SMC1B) and SMC3 heterodimer attached via their SMC hinge domain, RAD21 which link them, and one STAG protein (STAG1, STAG2 or meiosis-specific STAG3), which interacts with RAD21. In germ cell cohesin complexes, SMC1A is mutually exclusive with SMC1B. Found in a complex with CDCA5, SMC3 and RAD21, PDS5A/SCC-112 and PDS5B/APRIN. Interacts with STAG3, NDC80, BRAC1, BRAT1 and RPGR. Found in a complex containing POLE and SMC3. The cohesin complex interacts with the cohesin loading complex subunits NIPBL/Scc2 (via HEAT repeats) and MAU2/Scc4. NIPBL directly contacts all members of the complex, RAD21, SMC1A/B, SMC3 and STAG1. Interacts with SYCP2. Phosphorylated upon ionizing radiation or DNA methylation. Phosphorylation of Ser-957 and Ser-966 activates it and is required for S-phase checkpoint activation. Post-translationally, ubiquitinated by the DCX(DCAF15) complex, leading to its degradation.

Its subcellular location is the nucleus. It is found in the chromosome. Involved in chromosome cohesion during cell cycle and in DNA repair. Central component of cohesin complex. The cohesin complex is required for the cohesion of sister chromatids after DNA replication. The cohesin complex apparently forms a large proteinaceous ring within which sister chromatids can be trapped. At anaphase, the complex is cleaved and dissociates from chromatin, allowing sister chromatids to segregate. The cohesin complex may also play a role in spindle pole assembly during mitosis. Involved in DNA repair via its interaction with BRCA1 and its related phosphorylation by ATM, or via its phosphorylation by ATR. Works as a downstream effector both in the ATM/NBS1 branch and in the ATR/MSH2 branch of S-phase checkpoint. The polypeptide is Structural maintenance of chromosomes protein 1A (Smc1a) (Rattus norvegicus (Rat)).